The chain runs to 62 residues: Alpha-conotoxin-like Qc1.2 (62 aa).

Residues 1–21 form the signal peptide; the sequence is MGMRMMFTVFLLVALATTVAS. A propeptide spanning residues 22-48 is cleaved from the precursor; the sequence is FTLDRASNGRNAAADDKPSDWIALAIK. Glutamine 49 is subject to Pyrrolidone carboxylic acid. Disulfide bonds link cysteine 50–cysteine 56 and cysteine 51–cysteine 61.

It belongs to the conotoxin A superfamily. As to expression, expressed by the venom duct.

It is found in the secreted. Its function is as follows. Alpha-conotoxins bind to the nicotinic acetylcholine receptors (nAChR) and inhibit them. This synthetic peptide (10 uM) selectively, but weakly inhibits both rat neuronal alpha-3-beta-2/CHRNA3-CHRNB2 (63%) and alpha-3-beta-4/CHRNA3-CHRNB4 (37%) subtypes of nAChR. The polypeptide is Alpha-conotoxin-like Qc1.2 (Conus quercinus (Oak cone)).